The primary structure comprises 307 residues: Methionyl-tRNA formyltransferase (307 aa).

Residue 108-111 coordinates (6S)-5,6,7,8-tetrahydrofolate; the sequence is SLLP.

This sequence belongs to the Fmt family.

It catalyses the reaction L-methionyl-tRNA(fMet) + (6R)-10-formyltetrahydrofolate = N-formyl-L-methionyl-tRNA(fMet) + (6S)-5,6,7,8-tetrahydrofolate + H(+). In terms of biological role, attaches a formyl group to the free amino group of methionyl-tRNA(fMet). The formyl group appears to play a dual role in the initiator identity of N-formylmethionyl-tRNA by promoting its recognition by IF2 and preventing the misappropriation of this tRNA by the elongation apparatus. The chain is Methionyl-tRNA formyltransferase from Xylella fastidiosa (strain M23).